Consider the following 373-residue polypeptide: Anhydro-N-acetylmuramic acid kinase (373 aa).

An ATP-binding site is contributed by 12–19 (GTSLDGVD).

Belongs to the anhydro-N-acetylmuramic acid kinase family.

The enzyme catalyses 1,6-anhydro-N-acetyl-beta-muramate + ATP + H2O = N-acetyl-D-muramate 6-phosphate + ADP + H(+). Its pathway is amino-sugar metabolism; 1,6-anhydro-N-acetylmuramate degradation. The protein operates within cell wall biogenesis; peptidoglycan recycling. Its function is as follows. Catalyzes the specific phosphorylation of 1,6-anhydro-N-acetylmuramic acid (anhMurNAc) with the simultaneous cleavage of the 1,6-anhydro ring, generating MurNAc-6-P. Is required for the utilization of anhMurNAc either imported from the medium or derived from its own cell wall murein, and thus plays a role in cell wall recycling. The polypeptide is Anhydro-N-acetylmuramic acid kinase (Erwinia tasmaniensis (strain DSM 17950 / CFBP 7177 / CIP 109463 / NCPPB 4357 / Et1/99)).